The chain runs to 239 residues: Mannose-binding protein A (239 aa).

The first 18 residues, methionine 1–serine 18, serve as a signal peptide directing secretion. The tract at residues alanine 35–aspartate 88 is disordered. A Collagen-like domain is found at glycine 37–asparagine 89. Residues arginine 38 to glutamate 50 are compositionally biased toward basic and acidic residues. Residue proline 44 is modified to 4-hydroxyproline. A 5-hydroxylysine mark is found at lysine 45 and lysine 48. 2 O-linked (Gal...) hydroxylysine glycosylation sites follow: lysine 45 and lysine 48. 4-hydroxyproline is present on residues proline 51, proline 62, proline 68, proline 74, and proline 79. Positions leucine 58–proline 74 are enriched in low complexity. Lysine 80 and lysine 83 each carry 5-hydroxylysine. O-linked (Gal...) hydroxylysine glycans are attached at residues lysine 80 and lysine 83. The 96-residue stretch at serine 144–alanine 239 folds into the C-type lectin domain. Disulfide bonds link cysteine 146/cysteine 235 and cysteine 213/cysteine 227. Residues aspartate 179, glutamate 183, glutamate 203, asparagine 205, glutamate 211, aspartate 212, asparagine 223, and aspartate 224 each coordinate Ca(2+). The segment at glutamate 203–glutamate 211 is calcium-dependent carbohydrate binding.

As to quaternary structure, homotrimer. Forms higher oligomeric complexes formed by the association of two, three or more homotrimers. Oligomerization occurs in the endoplasmic reticulum. Interacts with MASP1 and MASP2. Post-translationally, hydroxylated on lysine and proline residues within the collagen-like domain. In terms of processing, O-glycosylated. O-linked glycans on hydroxylysine residues consist of Glc-Gal disaccharides bound to the oxygen atom of post-translationally added hydroxyl groups. Detected in liver and blood serum (at protein level). Detected in liver.

It is found in the secreted. Functionally, calcium-dependent lectin. Plays a role in the innate immune response by binding mannose, fucose and N-acetylglucosamine moieties on different microorganisms and mediating activation of the lectin complement pathway. Binds to late apoptotic cells, as well as to apoptotic blebs and to necrotic cells, but not to early apoptotic cells, facilitating their uptake by macrophages. The protein is Mannose-binding protein A (Mbl1) of Mus musculus (Mouse).